The chain runs to 122 residues: Large ribosomal subunit protein uL14 (122 aa).

This sequence belongs to the universal ribosomal protein uL14 family. Part of the 50S ribosomal subunit. Forms a cluster with proteins L3 and L19. In the 70S ribosome, L14 and L19 interact and together make contacts with the 16S rRNA in bridges B5 and B8.

Its function is as follows. Binds to 23S rRNA. Forms part of two intersubunit bridges in the 70S ribosome. This Streptococcus agalactiae serotype Ia (strain ATCC 27591 / A909 / CDC SS700) protein is Large ribosomal subunit protein uL14.